A 243-amino-acid chain; its full sequence is MTYCLRIADIPTNERPRERLMTHGPKVLATAELIAILLGTGQGPGKLSAVGLGQYLLQELGKNQRDPLAVLREVTPAELMQIPGIGPAKATSILAAVELGKRTFQFRPLDKTPIDSPVAAVAALSQDLMWQNQERFAVLLLDVKNRLLGTQVITIGTATETLASPREIFREIIRQGATRTIVAHNHPSGNVEPSPEDIELTRQLLAGAQLLGIPLLDHLILGNGNHQSLREVTTLWNDYPQGD.

One can recognise an MPN domain in the interval 113-235; it reads PIDSPVAAVA…HQSLREVTTL (123 aa). Zn(2+)-binding residues include His-184, His-186, and Asp-197. The JAMM motif motif lies at 184–197; it reads HNHPSGNVEPSPED.

The protein belongs to the UPF0758 family.

The sequence is that of UPF0758 protein Ava_0172 from Trichormus variabilis (strain ATCC 29413 / PCC 7937) (Anabaena variabilis).